The following is a 608-amino-acid chain: Albumin (608 aa).

The first 18 residues, 1 to 18, serve as a signal peptide directing secretion; it reads MKWVTFISLLFLFSSAYS. A propeptide spanning residues 19–24 is cleaved from the precursor; it reads RGVFRR. 3 Albumin domains span residues 19–210, 211–403, and 404–601; these read RGVF…DALE, GKSL…EFQP, and LVDE…KLVE. His-27 lines the Cu cation pocket. Ser-29 carries the phosphoserine modification. Ca(2+) is bound by residues Glu-30 and Asp-37. Cysteines 77 and 86 form a disulfide. Residues Ser-82 and Ser-89 each carry the phosphoserine modification. His-91 is a Zn(2+) binding site. 6 cysteine pairs are disulfide-bonded: Cys-99–Cys-115, Cys-114–Cys-125, Cys-148–Cys-193, Cys-192–Cys-201, Cys-224–Cys-270, and Cys-269–Cys-277. Thr-107 is modified (phosphothreonine). At Lys-229 the chain carries N6-succinyllysine. Glu-268 is a Ca(2+) binding site. 2 residues coordinate Zn(2+): His-271 and Asp-273. Ca(2+)-binding residues include Asp-273, Glu-276, Asp-279, and Asp-283. 8 disulfides stabilise this stretch: Cys-289-Cys-303, Cys-302-Cys-313, Cys-340-Cys-385, Cys-384-Cys-393, Cys-416-Cys-462, Cys-461-Cys-472, Cys-485-Cys-501, and Cys-500-Cys-511. At Ser-297 the chain carries Phosphoserine. Ser-443 carries the phosphoserine modification. A phosphothreonine mark is found at Thr-444 and Thr-446. Lys-460 carries the post-translational modification N6-succinyllysine. Ser-513 is subject to Phosphoserine. Disulfide bonds link Cys-538–Cys-583 and Cys-582–Cys-591. Lys-558 carries the post-translational modification N6-methyllysine. The residue at position 570 (Thr-570) is a Phosphothreonine. Lys-588 carries the post-translational modification N6-succinyllysine.

Belongs to the ALB/AFP/VDB family. Interacts with FCGRT; this interaction regulates ALB homeostasis. Interacts with TASOR. In plasma, occurs in a covalently-linked complex with chromophore-bound alpha-1-microglobulin; this interaction does not prevent fatty acid binding to ALB. In terms of processing, phosphorylated by FAM20C in the extracellular medium. Plasma.

It is found in the secreted. In terms of biological role, binds water, Ca(2+), Na(+), K(+), fatty acids, hormones, bilirubin and drugs. Its main function is the regulation of the colloidal osmotic pressure of blood. Major zinc transporter in plasma, typically binds about 80% of all plasma zinc. Major calcium and magnesium transporter in plasma, binds approximately 45% of circulating calcium and magnesium in plasma. Potentially has more than two calcium-binding sites and might additionally bind calcium in a non-specific manner. The shared binding site between zinc and calcium at residue Asp-273 suggests a crosstalk between zinc and calcium transport in the blood. The rank order of affinity is zinc &gt; calcium &gt; magnesium. Binds to the bacterial siderophore enterobactin and inhibits enterobactin-mediated iron uptake of E.coli from ferric transferrin, and may thereby limit the utilization of iron and growth of enteric bacteria such as E.coli. Does not prevent iron uptake by the bacterial siderophore aerobactin. The polypeptide is Albumin (ALB) (Oryctolagus cuniculus (Rabbit)).